Here is a 345-residue protein sequence, read N- to C-terminus: Phosphoribosylformylglycinamidine cyclo-ligase (345 aa).

The protein belongs to the AIR synthase family. In terms of assembly, homodimer.

The protein resides in the cytoplasm. The catalysed reaction is 2-formamido-N(1)-(5-O-phospho-beta-D-ribosyl)acetamidine + ATP = 5-amino-1-(5-phospho-beta-D-ribosyl)imidazole + ADP + phosphate + H(+). Its pathway is purine metabolism; IMP biosynthesis via de novo pathway; 5-amino-1-(5-phospho-D-ribosyl)imidazole from N(2)-formyl-N(1)-(5-phospho-D-ribosyl)glycinamide: step 2/2. This Escherichia coli O157:H7 protein is Phosphoribosylformylglycinamidine cyclo-ligase.